Here is a 50-residue protein sequence, read N- to C-terminus: Large ribosomal subunit protein eL39 (50 aa).

Basic residues predominate over residues 1 to 12; it reads MGKKSKASKKRL. 2 disordered regions span residues 1–20 and 30–50; these read MGKKSKASKKRLAKLERQNS and TNRDVQRNPKRRNWRRNDTDE.

Belongs to the eukaryotic ribosomal protein eL39 family.

This is Large ribosomal subunit protein eL39 (rpl39e) from Halobacterium salinarum (strain ATCC 700922 / JCM 11081 / NRC-1) (Halobacterium halobium).